Consider the following 236-residue polypeptide: MTKSQGFQFKQFFIAHDKCAMKVNTDGILLGAIADIRHKRQILDLGTGTGLVAIMLAQRTDENTQISALELEPNAYRQAVENCRNSAFSDRLQVYQGDVLDYHFHQKFDLIVSNPPYFSESLASRSYERDLARAATQSHLDWLLQAKKWLAEQGEISFILPFEAAEKLVEQSRTSCLFCTKICKIITKQGQAAKRMIVSFSAQNVPLEEQELVIYDADNQYTEAFKQLTKAFYLNM.

This sequence belongs to the methyltransferase superfamily. tRNA (adenine-N(6)-)-methyltransferase family.

The protein resides in the cytoplasm. It catalyses the reaction adenosine(37) in tRNA1(Val) + S-adenosyl-L-methionine = N(6)-methyladenosine(37) in tRNA1(Val) + S-adenosyl-L-homocysteine + H(+). In terms of biological role, specifically methylates the adenine in position 37 of tRNA(1)(Val) (anticodon cmo5UAC). In Actinobacillus pleuropneumoniae serotype 5b (strain L20), this protein is tRNA1(Val) (adenine(37)-N6)-methyltransferase.